A 118-amino-acid chain; its full sequence is Large ribosomal subunit protein bL20 (118 aa).

The protein belongs to the bacterial ribosomal protein bL20 family.

In terms of biological role, binds directly to 23S ribosomal RNA and is necessary for the in vitro assembly process of the 50S ribosomal subunit. It is not involved in the protein synthesizing functions of that subunit. This chain is Large ribosomal subunit protein bL20, found in Staphylococcus epidermidis (strain ATCC 35984 / DSM 28319 / BCRC 17069 / CCUG 31568 / BM 3577 / RP62A).